Reading from the N-terminus, the 265-residue chain is Hydroxyethylthiazole kinase (265 aa).

Substrate is bound at residue Met-50. 2 residues coordinate ATP: Arg-125 and Thr-171. Gly-198 contacts substrate.

The protein belongs to the Thz kinase family. The cofactor is Mg(2+).

The enzyme catalyses 5-(2-hydroxyethyl)-4-methylthiazole + ATP = 4-methyl-5-(2-phosphooxyethyl)-thiazole + ADP + H(+). Its pathway is cofactor biosynthesis; thiamine diphosphate biosynthesis; 4-methyl-5-(2-phosphoethyl)-thiazole from 5-(2-hydroxyethyl)-4-methylthiazole: step 1/1. Catalyzes the phosphorylation of the hydroxyl group of 4-methyl-5-beta-hydroxyethylthiazole (THZ). This chain is Hydroxyethylthiazole kinase, found in Salmonella schwarzengrund (strain CVM19633).